The sequence spans 341 residues: Glyceraldehyde-3-phosphate dehydrogenase, cytosolic (341 aa).

Residues 15–16 (RI), aspartate 37, and arginine 84 each bind NAD(+). Residues 155 to 157 (SCT), threonine 186, 215 to 216 (TG), and arginine 238 each bind D-glyceraldehyde 3-phosphate. Catalysis depends on cysteine 156, which acts as the Nucleophile. An NAD(+)-binding site is contributed by asparagine 320.

Belongs to the glyceraldehyde-3-phosphate dehydrogenase family. As to quaternary structure, homotetramer.

Its subcellular location is the cytoplasm. It carries out the reaction D-glyceraldehyde 3-phosphate + phosphate + NAD(+) = (2R)-3-phospho-glyceroyl phosphate + NADH + H(+). It participates in carbohydrate degradation; glycolysis; pyruvate from D-glyceraldehyde 3-phosphate: step 1/5. Its function is as follows. Key enzyme in glycolysis that catalyzes the first step of the pathway by converting D-glyceraldehyde 3-phosphate (G3P) into 3-phospho-D-glyceroyl phosphate. Essential for the maintenance of cellular ATP levels and carbohydrate metabolism. The chain is Glyceraldehyde-3-phosphate dehydrogenase, cytosolic (GAPC) from Magnolia liliiflora (Mulan magnolia).